The sequence spans 291 residues: Probable cell wall amidase LytH (291 aa).

The N-terminal stretch at 1 to 40 (MKKFNDWLEKHNLRNIPTLIVVVAFVLFVFMTIAFLNHND) is a signal peptide. One can recognise an SH3b domain in the interval 41–105 (EDSSTIYITE…WVAGWHTNLN (65 aa)). The interval 109–146 (DKNPNAKPLKDKTIVLDPGHGGSDQGASSNTHKKSKEK) is disordered. A MurNAc-LAA domain is found at 122–286 (IVLDPGHGGS…VEQAIVEGLR (165 aa)).

It belongs to the N-acetylmuramoyl-L-alanine amidase 3 family.

The protein resides in the secreted. Functionally, probably involved in cell-wall metabolism. This chain is Probable cell wall amidase LytH (lytH), found in Staphylococcus saprophyticus subsp. saprophyticus (strain ATCC 15305 / DSM 20229 / NCIMB 8711 / NCTC 7292 / S-41).